A 285-amino-acid chain; its full sequence is Aquaporin PIP2-5 (285 aa).

The next 2 helical transmembrane spans lie at 38–58 (AVIA…ATVI) and 75–95 (CGGV…FILV). Residues 107-109 (NPA) carry the NPA 1 motif. 3 helical membrane passes run 126–146 (LLYI…VKGF), 168–188 (GTGL…VFSA), and 202–222 (VLAP…TIPI). Residues 228-230 (NPA) carry the NPA 2 motif. Residues 250–270 (IFWVGPFIGAAIAAAYHQYVL) form a helical membrane-spanning segment.

The protein belongs to the MIP/aquaporin (TC 1.A.8) family. PIP (TC 1.A.8.11) subfamily. Homomers. May interact with PIP1-2 to form heteromers. In terms of tissue distribution, specifically expressed in roots, in the exodermis, endodermis and xylem parenchyma. Polar localization to the external periclinal side of epidermal cells in root apices.

It localises to the cell membrane. Water channel required to facilitate the transport of water across cell membrane. Its function is impaired by Hg(2+). May play a role in water uptake from the root surface. Active as homomers. Increased activity when heteromerization with PIP1-2. The polypeptide is Aquaporin PIP2-5 (PIP2-5) (Zea mays (Maize)).